Here is a 505-residue protein sequence, read N- to C-terminus: ATP synthase subunit alpha (505 aa).

169 to 176 (GDRQTGKT) serves as a coordination point for ATP.

It belongs to the ATPase alpha/beta chains family. In terms of assembly, F-type ATPases have 2 components, CF(1) - the catalytic core - and CF(0) - the membrane proton channel. CF(1) has five subunits: alpha(3), beta(3), gamma(1), delta(1), epsilon(1). CF(0) has three main subunits: a(1), b(2) and c(9-12). The alpha and beta chains form an alternating ring which encloses part of the gamma chain. CF(1) is attached to CF(0) by a central stalk formed by the gamma and epsilon chains, while a peripheral stalk is formed by the delta and b chains.

The protein localises to the cell membrane. It carries out the reaction ATP + H2O + 4 H(+)(in) = ADP + phosphate + 5 H(+)(out). In terms of biological role, produces ATP from ADP in the presence of a proton gradient across the membrane. The alpha chain is a regulatory subunit. The chain is ATP synthase subunit alpha from Alkaliphilus metalliredigens (strain QYMF).